Here is a 374-residue protein sequence, read N- to C-terminus: Isocitrate dehydrogenase [NAD] catalytic subunit 5, mitochondrial (374 aa).

Residues 1–44 (MTMAANLARRLIGNRSTQILGAVNSSSGAASSVARAFCSSTTPI) constitute a mitochondrion transit peptide. Substrate contacts are provided by Arg127, Arg137, Arg158, and Asp245. Mg(2+) contacts are provided by Asp245, Asp269, and Asp273.

The protein belongs to the isocitrate and isopropylmalate dehydrogenases family. Heterooligomer of catalytic and regulatory subunits. Requires Mg(2+) as cofactor. Mn(2+) serves as cofactor. As to expression, ubiquitous.

It is found in the mitochondrion. It carries out the reaction D-threo-isocitrate + NAD(+) = 2-oxoglutarate + CO2 + NADH. Performs an essential role in the oxidative function of the citric acid cycle. This Arabidopsis thaliana (Mouse-ear cress) protein is Isocitrate dehydrogenase [NAD] catalytic subunit 5, mitochondrial (IDH5).